Consider the following 560-residue polypeptide: Choline/ethanolamine transporter FLVCR1 (560 aa).

The segment at M1–E43 is disordered. Topologically, residues M1–P92 are cytoplasmic. A helical membrane pass occupies residues R93 to Q117. Topologically, residues W118–S135 are extracellular. A helical membrane pass occupies residues P136–T163. The Cytoplasmic portion of the chain corresponds to R164–G165. The helical transmembrane segment at L166–C185 threads the bilayer. The Extracellular portion of the chain corresponds to G186–L192. A helical membrane pass occupies residues F193–W221. An ethanolamine-binding site is contributed by Q207. Residues F222–E226 lie on the Cytoplasmic side of the membrane. The helical transmembrane segment at V227–L252 threads the bilayer. Topologically, residues V253–N270 are extracellular. N270 is a glycosylation site (N-linked (GlcNAc...) asparagine). A helical membrane pass occupies residues N271–A300. At F301–N336 the chain is on the cytoplasmic side. The chain crosses the membrane as a helical span at residues I337–Y367. Over Y368–E371 the chain is Extracellular. The chain crosses the membrane as a helical span at residues E372–T400. Topologically, residues K401–T402 are cytoplasmic. Residues Y403–L425 form a helical membrane-spanning segment. At N426 to G428 the chain is on the extracellular side. The helical transmembrane segment at Y429–I458 threads the bilayer. Over T459–M466 the chain is Cytoplasmic. Residues S467 to D492 form a helical membrane-spanning segment. Q476 is an ethanolamine binding site. Q476 serves as a coordination point for choline. Over Y493–S495 the chain is Extracellular. The helical transmembrane segment at P496 to K518 threads the bilayer. The Cytoplasmic portion of the chain corresponds to S519–L560. Residue S542 is modified to Phosphoserine.

The protein belongs to the major facilitator superfamily. Feline leukemia virus subgroup C receptor (TC 2.A.1.28.1) family.

It localises to the cell membrane. Its subcellular location is the mitochondrion membrane. The catalysed reaction is choline(out) = choline(in). The enzyme catalyses ethanolamine(in) = ethanolamine(out). It catalyses the reaction heme b(in) = heme b(out). Its function is as follows. Uniporter that mediates the transport of extracellular choline and ethanolamine into cells, thereby playing a key role in phospholipid biosynthesis. Choline and ethanolamine are the precursors of phosphatidylcholine and phosphatidylethanolamine, respectively, the two most abundant phospholipids. Transport is not coupled with proton transport and is exclusively driven by the choline (or ethanolamine) gradient across the plasma membrane. Also acts as a heme b transporter that mediates heme efflux from the cytoplasm to the extracellular compartment. Uniporter that mediates the transport of extracellular choline and ethanolamine into cells. Choline and ethanolamine are the precursors of phosphatidylcholine and phosphatidylethanolamine, respectively, the two most abundant phospholipids. Transport is not coupled with proton transport and is exclusively driven by the choline (or ethanolamine) gradient across the plasma membrane. Also acts as a heme b transporter that mediates heme efflux from the cytoplasm to the extracellular compartment. Heme export depends on the presence of HPX and is required to maintain intracellular free heme balance, protecting cells from heme toxicity. Heme export provides protection from heme or ferrous iron toxicities in liver, brain, sensory neurons and during erythropoiesis, a process in which heme synthesis intensifies. Possibly export coproporphyrin and protoporphyrin IX, which are both intermediate products in the heme biosynthetic pathway. Does not export bilirubin. The molecular mechanism of heme transport, whether electrogenic, electroneutral or coupled to other ions, remains to be elucidated. In terms of biological role, heme transporter that promotes heme efflux from the mitochondrion to the cytoplasm. Essential for erythroid differentiation. This is Choline/ethanolamine transporter FLVCR1 (Flvcr1) from Mus musculus (Mouse).